Consider the following 249-residue polypeptide: General transcription factor IIF subunit 2 (249 aa).

N-acetylalanine is present on A2. An N6-acetyllysine mark is found at K22, K33, and K137. S142 is modified (phosphoserine). Positions 227 and 229 each coordinate DNA. S248 bears the Phosphoserine mark.

This sequence belongs to the TFIIF beta subunit family. Heterodimer of an alpha and a beta subunit. Interacts with HTATSF1 and GPBP1. Interacts with URI1. Interacts with GTF2B (via N-terminus); this interaction is inhibited in presence of GTF2F1. Part of TBP-based Pol II pre-initiation complex (PIC), in which Pol II core assembles with general transcription factors and other specific initiation factors including GTF2E1, GTF2E2, GTF2F1, GTF2F2, TCEA1, ERCC2, ERCC3, GTF2H2, GTF2H3, GTF2H4, GTF2H5, GTF2A1, GTF2A2, GTF2B and TBP; this large multi-subunit PIC complex mediates DNA unwinding and targets Pol II core to the transcription start site where the first phosphodiester bond forms.

The protein localises to the nucleus. Functionally, TFIIF is a general transcription initiation factor that binds to RNA polymerase II and helps to recruit it to the initiation complex in collaboration with TFIIB. The sequence is that of General transcription factor IIF subunit 2 (GTF2F2) from Homo sapiens (Human).